The sequence spans 475 residues: Tesmin (475 aa).

Phosphoserine occurs at positions 34 and 67. In terms of domain architecture, CRC spans 263–372 (SGPALQGPPK…KCIACKNYEE (110 aa)).

Belongs to the lin-54 family.

The protein resides in the cytoplasm. Its subcellular location is the nucleus. May have a role in spermatogenesis. This chain is Tesmin, found in Rattus norvegicus (Rat).